The following is a 665-amino-acid chain: Protein-arginine deiminase type-2 (665 aa).

Ca(2+)-binding residues include Asp-123, Asp-125, Asp-127, Val-129, Glu-131, Asn-154, Asp-156, Glu-158, Asp-166, Asp-169, Lys-171, Asp-177, Asp-180, Glu-354, Asp-389, Phe-408, Leu-411, and Glu-412. The Nucleophile role is filled by Cys-647.

It belongs to the protein arginine deiminase family. Homodimer. It depends on Ca(2+) as a cofactor. Detected in keratinocytes in epidermis (at protein level).

It localises to the cytoplasm. It carries out the reaction L-arginyl-[protein] + H2O = L-citrullyl-[protein] + NH4(+). In terms of biological role, catalyzes the deimination of arginine residues of proteins. In Homo sapiens (Human), this protein is Protein-arginine deiminase type-2 (PADI2).